The primary structure comprises 436 residues: 3-ketoacyl-CoA thiolase (436 aa).

C99 functions as the Acyl-thioester intermediate in the catalytic mechanism. Residues H392 and C422 each act as proton acceptor in the active site.

The protein belongs to the thiolase-like superfamily. Thiolase family. Heterotetramer of two alpha chains (FadJ) and two beta chains (FadI).

The protein resides in the cytoplasm. It carries out the reaction an acyl-CoA + acetyl-CoA = a 3-oxoacyl-CoA + CoA. Its pathway is lipid metabolism; fatty acid beta-oxidation. Its function is as follows. Catalyzes the final step of fatty acid oxidation in which acetyl-CoA is released and the CoA ester of a fatty acid two carbons shorter is formed. The chain is 3-ketoacyl-CoA thiolase from Salmonella newport (strain SL254).